The chain runs to 903 residues: Translation initiation factor IF-2 (903 aa).

The disordered stretch occupies residues 66–296; the sequence is QATLKGEGPV…GRSRKREMEN (231 aa). The segment covering 121 to 132 has biased composition (basic and acidic residues); that stretch reads NTDETRVQEHKP. Composition is skewed to low complexity over residues 139–152 and 178–195; these read AGDA…AAAG and AATG…GQQS. Positions 204–231 are enriched in basic and acidic residues; that stretch reads EGRSRQDENKGSAREDQANRFATRDKEA. Positions 246 to 255 are enriched in basic residues; the sequence is RRPAHSKPLR. Basic and acidic residues-rich tracts occupy residues 263–276 and 285–296; these read VTKD…DRSN and ESGRSRKREMEN. The tr-type G domain maps to 403–572; sequence ERPPVVTVMG…LLTADVAELK (170 aa). The tract at residues 412–419 is G1; the sequence is GHVDHGKT. 412–419 is a binding site for GTP; the sequence is GHVDHGKT. The interval 437–441 is G2; the sequence is GITQH. A G3 region spans residues 458-461; it reads DTPG. Residues 458–462 and 512–515 each bind GTP; these read DTPGH and NKID. Residues 512–515 are G4; sequence NKID. Residues 548–550 are G5; the sequence is SAV.

It belongs to the TRAFAC class translation factor GTPase superfamily. Classic translation factor GTPase family. IF-2 subfamily.

The protein localises to the cytoplasm. In terms of biological role, one of the essential components for the initiation of protein synthesis. Protects formylmethionyl-tRNA from spontaneous hydrolysis and promotes its binding to the 30S ribosomal subunits. Also involved in the hydrolysis of GTP during the formation of the 70S ribosomal complex. In Moorella thermoacetica (strain ATCC 39073 / JCM 9320), this protein is Translation initiation factor IF-2.